Here is a 129-residue protein sequence, read N- to C-terminus: Glycine cleavage system H protein (129 aa).

One can recognise a Lipoyl-binding domain in the interval 24–106; sequence SYTVGISEHA…FGDGWFFRVM (83 aa). Position 65 is an N6-lipoyllysine (K65).

The protein belongs to the GcvH family. As to quaternary structure, the glycine cleavage system is composed of four proteins: P, T, L and H. The cofactor is (R)-lipoate.

Functionally, the glycine cleavage system catalyzes the degradation of glycine. The H protein shuttles the methylamine group of glycine from the P protein to the T protein. In Shewanella woodyi (strain ATCC 51908 / MS32), this protein is Glycine cleavage system H protein.